A 425-amino-acid polypeptide reads, in one-letter code: Adenylosuccinate synthetase (425 aa).

GTP is bound by residues 12 to 18 and 40 to 42; these read GDEGKGK and GHT. Asp13 acts as the Proton acceptor in catalysis. Positions 13 and 40 each coordinate Mg(2+). IMP contacts are provided by residues 13-16, 38-41, Thr129, Arg143, Asn221, Thr236, and Arg300; these read DEGK and NAGH. The active-site Proton donor is the His41. Substrate is bound at residue 296–302; that stretch reads VTTGRKR. GTP is bound by residues Arg302, 328 to 330, and 410 to 412; these read KLD and GVG.

Belongs to the adenylosuccinate synthetase family. In terms of assembly, homodimer. The cofactor is Mg(2+).

The protein resides in the cytoplasm. The catalysed reaction is IMP + L-aspartate + GTP = N(6)-(1,2-dicarboxyethyl)-AMP + GDP + phosphate + 2 H(+). Its pathway is purine metabolism; AMP biosynthesis via de novo pathway; AMP from IMP: step 1/2. Its function is as follows. Plays an important role in the de novo pathway and in the salvage pathway of purine nucleotide biosynthesis. Catalyzes the first committed step in the biosynthesis of AMP from IMP. The protein is Adenylosuccinate synthetase of Phaeosphaeria nodorum (strain SN15 / ATCC MYA-4574 / FGSC 10173) (Glume blotch fungus).